The chain runs to 223 residues: 3,4-dihydroxy-2-butanone 4-phosphate synthase (223 aa).

Residues 39–40 (RE), Asp-44, 152–156 (RRGHT), and Glu-176 each bind D-ribulose 5-phosphate. A Mg(2+)-binding site is contributed by Glu-40. His-155 is a binding site for Mg(2+).

Belongs to the DHBP synthase family. In terms of assembly, homodimer. Requires Mg(2+) as cofactor. It depends on Mn(2+) as a cofactor.

The catalysed reaction is D-ribulose 5-phosphate = (2S)-2-hydroxy-3-oxobutyl phosphate + formate + H(+). The protein operates within cofactor biosynthesis; riboflavin biosynthesis; 2-hydroxy-3-oxobutyl phosphate from D-ribulose 5-phosphate: step 1/1. Catalyzes the conversion of D-ribulose 5-phosphate to formate and 3,4-dihydroxy-2-butanone 4-phosphate. This is 3,4-dihydroxy-2-butanone 4-phosphate synthase from Desulfovibrio desulfuricans (strain ATCC 27774 / DSM 6949 / MB).